A 359-amino-acid polypeptide reads, in one-letter code: 3-dehydroquinate synthase (359 aa).

NAD(+) contacts are provided by residues 71-76 (DGEAYK), 105-109 (GVIGD), 129-130 (TT), Lys-142, and Lys-151. The Zn(2+) site is built by Glu-184, His-247, and His-264.

The protein belongs to the sugar phosphate cyclases superfamily. Dehydroquinate synthase family. Co(2+) serves as cofactor. It depends on Zn(2+) as a cofactor. The cofactor is NAD(+).

Its subcellular location is the cytoplasm. It catalyses the reaction 7-phospho-2-dehydro-3-deoxy-D-arabino-heptonate = 3-dehydroquinate + phosphate. It participates in metabolic intermediate biosynthesis; chorismate biosynthesis; chorismate from D-erythrose 4-phosphate and phosphoenolpyruvate: step 2/7. Its function is as follows. Catalyzes the conversion of 3-deoxy-D-arabino-heptulosonate 7-phosphate (DAHP) to dehydroquinate (DHQ). In Burkholderia ambifaria (strain MC40-6), this protein is 3-dehydroquinate synthase.